Reading from the N-terminus, the 66-residue chain is UPF0434 protein RPC_0266 (66 aa).

The protein belongs to the UPF0434 family.

The protein is UPF0434 protein RPC_0266 of Rhodopseudomonas palustris (strain BisB18).